The sequence spans 159 residues: Transcription elongation factor GreA (159 aa).

A coiled-coil region spans residues 44–75; that stretch reads SENAEYDAAREQQSQTEARIADLENKLSTATI.

It belongs to the GreA/GreB family.

Necessary for efficient RNA polymerase transcription elongation past template-encoded arresting sites. The arresting sites in DNA have the property of trapping a certain fraction of elongating RNA polymerases that pass through, resulting in locked ternary complexes. Cleavage of the nascent transcript by cleavage factors such as GreA or GreB allows the resumption of elongation from the new 3'terminus. GreA releases sequences of 2 to 3 nucleotides. This chain is Transcription elongation factor GreA, found in Chlorobium limicola (strain DSM 245 / NBRC 103803 / 6330).